The chain runs to 295 residues: UDP-3-O-acyl-N-acetylglucosamine deacetylase (295 aa).

Zn(2+) is bound by residues His75, His232, and Asp236. Residue His259 is the Proton donor of the active site.

Belongs to the LpxC family. Requires Zn(2+) as cofactor.

It catalyses the reaction a UDP-3-O-[(3R)-3-hydroxyacyl]-N-acetyl-alpha-D-glucosamine + H2O = a UDP-3-O-[(3R)-3-hydroxyacyl]-alpha-D-glucosamine + acetate. It participates in glycolipid biosynthesis; lipid IV(A) biosynthesis; lipid IV(A) from (3R)-3-hydroxytetradecanoyl-[acyl-carrier-protein] and UDP-N-acetyl-alpha-D-glucosamine: step 2/6. Catalyzes the hydrolysis of UDP-3-O-myristoyl-N-acetylglucosamine to form UDP-3-O-myristoylglucosamine and acetate, the committed step in lipid A biosynthesis. The sequence is that of UDP-3-O-acyl-N-acetylglucosamine deacetylase from Helicobacter pylori (strain ATCC 700392 / 26695) (Campylobacter pylori).